The primary structure comprises 311 residues: Ribosomal protein L11 methyltransferase (311 aa).

The S-adenosyl-L-methionine site is built by threonine 162, glycine 183, aspartate 205, and asparagine 248.

It belongs to the methyltransferase superfamily. PrmA family.

Its subcellular location is the cytoplasm. It carries out the reaction L-lysyl-[protein] + 3 S-adenosyl-L-methionine = N(6),N(6),N(6)-trimethyl-L-lysyl-[protein] + 3 S-adenosyl-L-homocysteine + 3 H(+). Methylates ribosomal protein L11. The chain is Ribosomal protein L11 methyltransferase from Bacillus pumilus (strain SAFR-032).